We begin with the raw amino-acid sequence, 587 residues long: Pyruvate decarboxylase 3 (587 aa).

The substrate site is built by Asp48 and His135. The tract at residues Asp415–Ile496 is thiamine pyrophosphate binding. The Mg(2+) site is built by Asp464, Asn491, and Gly493. Substrate is bound at residue Glu497.

This sequence belongs to the TPP enzyme family. As to quaternary structure, homotetramer. The cofactor is a metal cation. It depends on thiamine diphosphate as a cofactor.

The enzyme catalyses a 2-oxocarboxylate + H(+) = an aldehyde + CO2. The protein is Pyruvate decarboxylase 3 (PDC3) of Oryza sativa subsp. indica (Rice).